The primary structure comprises 77 residues: Large ribosomal subunit protein bL28 (77 aa).

Positions 1–20 (MSRVCQVTGKGPVTGNNISH) are disordered.

It belongs to the bacterial ribosomal protein bL28 family.

The sequence is that of Large ribosomal subunit protein bL28 from Pseudomonas syringae pv. tomato (strain ATCC BAA-871 / DC3000).